Here is a 310-residue protein sequence, read N- to C-terminus: tRNA dimethylallyltransferase (310 aa).

19-26 contacts ATP; that stretch reads GPTGTGKS. Substrate is bound at residue 21–26; sequence TGTGKS.

It belongs to the IPP transferase family. As to quaternary structure, monomer. It depends on Mg(2+) as a cofactor.

The catalysed reaction is adenosine(37) in tRNA + dimethylallyl diphosphate = N(6)-dimethylallyladenosine(37) in tRNA + diphosphate. Catalyzes the transfer of a dimethylallyl group onto the adenine at position 37 in tRNAs that read codons beginning with uridine, leading to the formation of N6-(dimethylallyl)adenosine (i(6)A). This Saccharopolyspora erythraea (strain ATCC 11635 / DSM 40517 / JCM 4748 / NBRC 13426 / NCIMB 8594 / NRRL 2338) protein is tRNA dimethylallyltransferase.